The primary structure comprises 931 residues: Protein translocase subunit SecA (931 aa).

ATP is bound by residues Gln87, 105 to 109 (GEGKT), and Asp515. Residues Cys915, Cys917, Cys926, and His927 each contribute to the Zn(2+) site.

It belongs to the SecA family. As to quaternary structure, monomer and homodimer. Part of the essential Sec protein translocation apparatus which comprises SecA, SecYEG and auxiliary proteins SecDF-YajC and YidC. The cofactor is Zn(2+).

The protein resides in the cell inner membrane. The protein localises to the cytoplasm. It carries out the reaction ATP + H2O + cellular proteinSide 1 = ADP + phosphate + cellular proteinSide 2.. In terms of biological role, part of the Sec protein translocase complex. Interacts with the SecYEG preprotein conducting channel. Has a central role in coupling the hydrolysis of ATP to the transfer of proteins into and across the cell membrane, serving both as a receptor for the preprotein-SecB complex and as an ATP-driven molecular motor driving the stepwise translocation of polypeptide chains across the membrane. The polypeptide is Protein translocase subunit SecA (Burkholderia pseudomallei (strain 1106a)).